Reading from the N-terminus, the 111-residue chain is MKENKIRKNKEFRHVYRRGKSYSNRLLVLYICKNRCNINRLGVSVSKKVGKSVTRNRVKRLIKESYRLNLDKDMKQGYDLVFIARNSSNDKDYKDIESALINLLKKAGIYN.

This sequence belongs to the RnpA family. As to quaternary structure, consists of a catalytic RNA component (M1 or rnpB) and a protein subunit.

The enzyme catalyses Endonucleolytic cleavage of RNA, removing 5'-extranucleotides from tRNA precursor.. In terms of biological role, RNaseP catalyzes the removal of the 5'-leader sequence from pre-tRNA to produce the mature 5'-terminus. It can also cleave other RNA substrates such as 4.5S RNA. The protein component plays an auxiliary but essential role in vivo by binding to the 5'-leader sequence and broadening the substrate specificity of the ribozyme. The protein is Ribonuclease P protein component of Clostridium botulinum (strain Loch Maree / Type A3).